The chain runs to 76 residues: Large ribosomal subunit protein bL31 (76 aa).

Belongs to the bacterial ribosomal protein bL31 family. Type A subfamily. Part of the 50S ribosomal subunit.

In terms of biological role, binds the 23S rRNA. The protein is Large ribosomal subunit protein bL31 of Rhizorhabdus wittichii (strain DSM 6014 / CCUG 31198 / JCM 15750 / NBRC 105917 / EY 4224 / RW1) (Sphingomonas wittichii).